We begin with the raw amino-acid sequence, 176 residues long: Woronin body major protein (176 aa).

Residues 1–16 (MGYYDDDAHGHVEADA) constitute a propeptide that is removed on maturation. Basic and acidic residues predominate over residues 1–16 (MGYYDDDAHGHVEADA). The tract at residues 1 to 31 (MGYYDDDAHGHVEADAAPRATTGTGTGSASQ) is disordered. Positions 174–176 (SRL) match the Microbody targeting signal motif.

Belongs to the eIF-5A family. Hex1 subfamily. Forms oligomers. Self-assembles into hexagonal rods.

It is found in the cell septum. Functionally, major component of Woronin bodies, fungal-specific organelles that occlude septal pores in order to separate intact from damaged compartments. Hex-1 binds directly or indirectly to the Woronin body tether that in turn is anchored at the rim of the septal pore. This Neurospora crassa (strain ATCC 24698 / 74-OR23-1A / CBS 708.71 / DSM 1257 / FGSC 987) protein is Woronin body major protein.